The sequence spans 344 residues: Phenylalanine--tRNA ligase alpha subunit (344 aa).

Residue E259 participates in Mg(2+) binding.

Belongs to the class-II aminoacyl-tRNA synthetase family. Phe-tRNA synthetase alpha subunit type 1 subfamily. As to quaternary structure, tetramer of two alpha and two beta subunits. Mg(2+) is required as a cofactor.

The protein localises to the cytoplasm. It catalyses the reaction tRNA(Phe) + L-phenylalanine + ATP = L-phenylalanyl-tRNA(Phe) + AMP + diphosphate + H(+). The sequence is that of Phenylalanine--tRNA ligase alpha subunit from Petrotoga mobilis (strain DSM 10674 / SJ95).